The following is a 1080-amino-acid chain: DNA-directed RNA polymerase subunit beta C-terminal section (1080 aa).

The protein belongs to the RNA polymerase beta chain family. As to quaternary structure, in plastids the minimal PEP RNA polymerase catalytic core is composed of four subunits: alpha, beta, beta', and beta''. When a (nuclear-encoded) sigma factor is associated with the core the holoenzyme is formed, which can initiate transcription.

It localises to the plastid. It is found in the chloroplast. It catalyses the reaction RNA(n) + a ribonucleoside 5'-triphosphate = RNA(n+1) + diphosphate. DNA-dependent RNA polymerase catalyzes the transcription of DNA into RNA using the four ribonucleoside triphosphates as substrates. This Stigeoclonium helveticum (Green alga) protein is DNA-directed RNA polymerase subunit beta C-terminal section (rpoB2).